The sequence spans 669 residues: Dymeclin (669 aa).

Residue glycine 2 is the site of N-myristoyl glycine attachment.

Belongs to the dymeclin family. As to quaternary structure, interacts with GOLM1 and PPIB. Myristoylated in vitro; myristoylation is not essential for protein targeting to Golgi compartment. Expressed in most embryo-fetal and adult tissues. Abundant in primary chondrocytes, osteoblasts, cerebellum, kidney, lung, stomach, heart, pancreas and fetal brain. Very low or no expression in the spleen, thymus, esophagus, bladder and thyroid gland.

It is found in the cytoplasm. Its subcellular location is the golgi apparatus. The protein localises to the membrane. In terms of biological role, necessary for correct organization of Golgi apparatus. Involved in bone development. This Homo sapiens (Human) protein is Dymeclin (DYM).